We begin with the raw amino-acid sequence, 539 residues long: Hydroxylamine reductase (539 aa).

Cys-3, Cys-6, Cys-15, and Cys-21 together coordinate [4Fe-4S] cluster. Hybrid [4Fe-2O-2S] cluster-binding residues include His-235, Glu-259, Cys-303, Cys-394, Cys-422, Cys-447, Glu-482, and Lys-484. Cys-394 carries the post-translational modification Cysteine persulfide.

The protein belongs to the HCP family. Requires [4Fe-4S] cluster as cofactor. Hybrid [4Fe-2O-2S] cluster is required as a cofactor.

Its subcellular location is the cytoplasm. The catalysed reaction is A + NH4(+) + H2O = hydroxylamine + AH2 + H(+). In terms of biological role, catalyzes the reduction of hydroxylamine to form NH(3) and H(2)O. This chain is Hydroxylamine reductase, found in Methanocaldococcus jannaschii (strain ATCC 43067 / DSM 2661 / JAL-1 / JCM 10045 / NBRC 100440) (Methanococcus jannaschii).